A 272-amino-acid polypeptide reads, in one-letter code: Large ribosomal subunit protein uL2 (272 aa).

The interval 222-272 is disordered; it reads GVAMNPIDHPLGGGEGKSSGGRAACTPWGKPEGVKTRKNKRTDKFIIKRRK. Basic and acidic residues predominate over residues 263–272; it reads TDKFIIKRRK.

It belongs to the universal ribosomal protein uL2 family. As to quaternary structure, part of the 50S ribosomal subunit. Forms a bridge to the 30S subunit in the 70S ribosome.

One of the primary rRNA binding proteins. Required for association of the 30S and 50S subunits to form the 70S ribosome, for tRNA binding and peptide bond formation. It has been suggested to have peptidyltransferase activity; this is somewhat controversial. Makes several contacts with the 16S rRNA in the 70S ribosome. This is Large ribosomal subunit protein uL2 from Thermodesulfovibrio yellowstonii (strain ATCC 51303 / DSM 11347 / YP87).